A 184-amino-acid chain; its full sequence is Translation initiation factor IF-3 (184 aa).

This sequence belongs to the IF-3 family. In terms of assembly, monomer.

It localises to the cytoplasm. In terms of biological role, IF-3 binds to the 30S ribosomal subunit and shifts the equilibrium between 70S ribosomes and their 50S and 30S subunits in favor of the free subunits, thus enhancing the availability of 30S subunits on which protein synthesis initiation begins. The protein is Translation initiation factor IF-3 of Hamiltonella defensa subsp. Acyrthosiphon pisum (strain 5AT).